Reading from the N-terminus, the 142-residue chain is Large ribosomal subunit protein uL16 (142 aa).

Belongs to the universal ribosomal protein uL16 family. As to quaternary structure, part of the 50S ribosomal subunit.

Binds 23S rRNA and is also seen to make contacts with the A and possibly P site tRNAs. The sequence is that of Large ribosomal subunit protein uL16 from Thermotoga maritima (strain ATCC 43589 / DSM 3109 / JCM 10099 / NBRC 100826 / MSB8).